The sequence spans 68 residues: MPKLKTKSAVKKRFKLTASGKVIASQAGKKHFMRRRTKAQIRNLRGTTILCPQDGYNIKKYFLPYGIN.

The protein belongs to the bacterial ribosomal protein bL35 family.

This chain is Large ribosomal subunit protein bL35, found in Rickettsia felis (strain ATCC VR-1525 / URRWXCal2) (Rickettsia azadi).